Here is a 741-residue protein sequence, read N- to C-terminus: Polyribonucleotide nucleotidyltransferase (741 aa).

Positions 489 and 495 each coordinate Mg(2+). Residues 556-615 (PKIDSIQIPVDKIKVVIGKGGETIDKIIAETGVTIDIDEEGLVQIFSSDQDAIDRAKTII) form the KH domain. The S1 motif domain occupies 625–693 (GEVYTVPVVR…EKGRVDASIK (69 aa)). Residues 695–741 (LLPKPEKNEDGENGEEHRHCCCSHHKPDHHNESVEAPKKSDESETKE) form a disordered region. 2 stretches are compositionally biased toward basic and acidic residues: residues 698–713 (KPEK…EHRH) and 723–741 (HHNE…ETKE).

Belongs to the polyribonucleotide nucleotidyltransferase family. It depends on Mg(2+) as a cofactor.

It localises to the cytoplasm. The catalysed reaction is RNA(n+1) + phosphate = RNA(n) + a ribonucleoside 5'-diphosphate. Involved in mRNA degradation. Catalyzes the phosphorolysis of single-stranded polyribonucleotides processively in the 3'- to 5'-direction. The protein is Polyribonucleotide nucleotidyltransferase of Streptococcus thermophilus (strain CNRZ 1066).